We begin with the raw amino-acid sequence, 64 residues long: DNA-binding protein 7 (64 aa).

N6-methyllysine occurs at positions 5 and 7.

It belongs to the 7 kDa DNA-binding/endoribonuclease P2 family. As to quaternary structure, monomer.

The protein resides in the cytoplasm. Can constrain negative DNA supercoils. May be involved in maintaining the integrity of the genome at high temperature. The sequence is that of DNA-binding protein 7 from Sulfurisphaera tokodaii (strain DSM 16993 / JCM 10545 / NBRC 100140 / 7) (Sulfolobus tokodaii).